The primary structure comprises 501 residues: ATP-dependent rRNA helicase RRP3 (501 aa).

A coiled-coil region spans residues 3–44; it reads KIVKRKEKKANDELTSLAEKIRAKALENQKKLIEAEKEGGSE. Residues 36 to 79 are disordered; that stretch reads EAEKEGGSESDSEEDATAEKKKVLKSKSKSTVSTQNENTNEDES. Residues S43, S45, and S47 each carry the phosphoserine modification. Positions 81 to 109 match the Q motif motif; that stretch reads ESFSELNLVPELIQACKNLNYSKPTPIQS. The Helicase ATP-binding domain occupies 112-284; sequence IPPALEGHDI…RASLTNPVKC (173 aa). 125–132 serves as a coordination point for ATP; it reads AQTGSGKT. Residues 231 to 234 carry the DEAD box motif; sequence DEAD. A Helicase C-terminal domain is found at 307-461; that stretch reads LKNTYLIYLL…NIILTLRDSV (155 aa). The interval 480-501 is disordered; that stretch reads IARGKGRRGRMMTRENMDMGER. Basic and acidic residues predominate over residues 491–501; the sequence is MTRENMDMGER.

This sequence belongs to the DEAD box helicase family. DDX47/RRP3 subfamily. As to quaternary structure, interacts with the SSU processome.

It localises to the nucleus. It catalyses the reaction ATP + H2O = ADP + phosphate + H(+). Its function is as follows. ATP-dependent rRNA helicase required for pre-ribosomal RNA processing. Involved in the maturation of the 35S-pre-rRNA and to its cleavage to mature 18S rRNA. The chain is ATP-dependent rRNA helicase RRP3 from Saccharomyces cerevisiae (strain YJM789) (Baker's yeast).